An 808-amino-acid polypeptide reads, in one-letter code: MSSTQAPVEPPKRRRIGVLTSGGDAPGMNGAVRAVVRMAIYSDCEAYAVFEGYEGLVHGGHMIRQLHWEDVRGWLSKGGTLIGSARSMAFRERAGRLKAAKNMVLRGIDALVVCGGDGSLTGADVFRSEWPGLLEELVKNGELTEEQIEPYKVLNIVGLVGSIDNDMSGTDATIGCYSSLTRICDAVDDVFDTAFSHQRGFVIEVMGRHCGWLALMSAISTGADWLFIPEMPPRDGWEDDMCSIITKNRKERGKRRTIVIVAEGAQDRSLNKISSSTVKDILTQRLGLDTRVTVLGHTQRGGPACAYDRWLSTLQGVEAVRAVLDMKPDSPSPVITIRENKIMRTPLVDAVQETKHVAKLIHDKDFEAAMRLRDAEFKEYHFAYRNTATPDHPKMILPQDKRMRIAIIHVGAPAGGMNQATRAAVGYCLTRGHTPLAIHNGFPGLCRHHDDQPVGSVREVKWLESDAWVNEGGSDIGTNRSLPSEDFETTAMCFEKYKFDALFVVGGFEAFTAVSQLRQARDKYPAFKIPMVVLPATISNNVPGTEYSLGSDTCLNTLIDFCDAIRQSASSSRRRVFVIETQGGKSGYIATTAGLAVGATAVYIPEEGIDIKMLSNDIDFLRENFARDKGANRAGKLILRNECASSTYTTQVIADIFKEEAKGRFESRSAVPGHFQQGGKPSPMDRIRALRMAVKCMLHLENYAGKSRDEIAADPMSAAVIGIKGSQVLFSAMGGEDGLEATETDWARRRPKTEFWLELQNYVNVLSGRASAGKPLWSCYESKHFPSCCRLYNTDLSIDIDPSALTSS.

A disordered region spans residues 1–21 (MSSTQAPVEPPKRRRIGVLTS). An N-terminal catalytic PFK domain 1 region spans residues 1–389 (MSSTQAPVEP…YHFAYRNTAT (389 aa)). ATP is bound by residues glycine 23, 86–87 (RS), and 116–119 (GDGS). A Mg(2+)-binding site is contributed by aspartate 117. Substrate-binding positions include 162-164 (SID), arginine 199, 206-208 (MGR), glutamate 263, arginine 291, and 297-300 (HTQR). Residue aspartate 164 is the Proton acceptor of the active site. The tract at residues 390 to 403 (PDHPKMILPQDKRM) is interdomain linker. The C-terminal regulatory PFK domain 2 stretch occupies residues 404-808 (RIAIIHVGAP…DIDPSALTSS (405 aa)). Beta-D-fructose 2,6-bisphosphate-binding positions include arginine 480, 537-541 (TISNN), arginine 575, 582-584 (QGG), glutamate 642, arginine 668, 674-677 (HFQQ), and arginine 749.

It belongs to the phosphofructokinase type A (PFKA) family. ATP-dependent PFK group I subfamily. Eukaryotic two domain clade 'E' sub-subfamily. As to quaternary structure, homotetramer. Mg(2+) is required as a cofactor.

The protein resides in the cytoplasm. It catalyses the reaction beta-D-fructose 6-phosphate + ATP = beta-D-fructose 1,6-bisphosphate + ADP + H(+). It participates in carbohydrate degradation; glycolysis; D-glyceraldehyde 3-phosphate and glycerone phosphate from D-glucose: step 3/4. Allosterically activated by ADP, AMP, or fructose 2,6-bisphosphate, and allosterically inhibited by ATP or citrate. Its function is as follows. Catalyzes the phosphorylation of D-fructose 6-phosphate to fructose 1,6-bisphosphate by ATP, the first committing step of glycolysis. This Aspergillus fumigatus (strain ATCC MYA-4609 / CBS 101355 / FGSC A1100 / Af293) (Neosartorya fumigata) protein is ATP-dependent 6-phosphofructokinase (pfkA).